A 269-amino-acid chain; its full sequence is Imidazole glycerol phosphate synthase subunit HisF (269 aa).

Catalysis depends on residues Asp-23 and Asp-142.

The protein belongs to the HisA/HisF family. In terms of assembly, heterodimer of HisH and HisF.

The protein localises to the cytoplasm. It catalyses the reaction 5-[(5-phospho-1-deoxy-D-ribulos-1-ylimino)methylamino]-1-(5-phospho-beta-D-ribosyl)imidazole-4-carboxamide + L-glutamine = D-erythro-1-(imidazol-4-yl)glycerol 3-phosphate + 5-amino-1-(5-phospho-beta-D-ribosyl)imidazole-4-carboxamide + L-glutamate + H(+). Its pathway is amino-acid biosynthesis; L-histidine biosynthesis; L-histidine from 5-phospho-alpha-D-ribose 1-diphosphate: step 5/9. Its function is as follows. IGPS catalyzes the conversion of PRFAR and glutamine to IGP, AICAR and glutamate. The HisF subunit catalyzes the cyclization activity that produces IGP and AICAR from PRFAR using the ammonia provided by the HisH subunit. In Bordetella parapertussis (strain 12822 / ATCC BAA-587 / NCTC 13253), this protein is Imidazole glycerol phosphate synthase subunit HisF.